The following is a 102-amino-acid chain: MYAVVKTGGKQYKVSEGDFLKVEKLEGAVGDTVEFSEILMVGGDKVVIGTPLVPSASVVGKIVEQGKDKKILVFKSKRRKNTRKLNGHRQLRTILMIEKINA.

Belongs to the bacterial ribosomal protein bL21 family. Part of the 50S ribosomal subunit. Contacts protein L20.

Its function is as follows. This protein binds to 23S rRNA in the presence of protein L20. The sequence is that of Large ribosomal subunit protein bL21 from Geobacter sp. (strain M21).